The following is a 393-amino-acid chain: Purine permease 14 (393 aa).

Residue A2 is modified to N-acetylalanine. A run of 10 helical transmembrane segments spans residues 46 to 66, 90 to 110, 133 to 153, 161 to 181, 189 to 209, 225 to 245, 268 to 288, 308 to 328, 339 to 359, and 363 to 383; these read WPTI…AKLL, TQSL…LIFI, LAVI…LAAM, GVFT…AAFI, WVVI…SSSF, WAAL…QNVF, VIIF…LIAG, VMAM…IVGL, VISV…FNFM, and FDAF…AYFF.

This sequence belongs to the purine permeases (TC 2.A.7.14) family. As to expression, expressed in seedlings, leaves, embryos, ovules, seeds and the root and shoot meristems. In heart-stage embryos, detected in cells that failed to respond to cytokinins, including the prospective cotyledons.

It localises to the cell membrane. Functionally, purine permease implicated in ATP-dependent cytokinin translocation that controls the spatiotemporal landscape of cytokinin signaling. Depletes ligands from the apoplast, which leads to a suppression of the cytokinin response. This is Purine permease 14 from Arabidopsis thaliana (Mouse-ear cress).